A 453-amino-acid polypeptide reads, in one-letter code: MDRRIFGLENEYGVTCTFRGQRRLSPDEVARYLFRRVVSWGRSSNVFLRNGARLYLDVGSHPEYATPECDNVTELVTHDKAGERILEGLLVDAERRLHEEGIAGDVYLFKNNTDSAGNSYGCHENYLVARHGEFSRLADILIPFLVTRQLICGAGKVLQTPRGAVYCVSQRAEHIWEGVSSATTRSRPIINTRDEPHADAERYRRLHVIVGDSNMSETTMLLKVGATDLVLRMIEAGTVMRDLTLENPIRAIREVSHDLTGQRKVRLASGREASAIEVQREYYEKAVDFVERRGIRTGTVDQVLELWGRTLDAVEAQDLDRIDTEIDWVMKYKLIERYRAKHNMTMSNPRVAQIDLAYHDIHRRRGLFYLLERKGQTARICNDLKIFEGKSVPPQTTRARLRGDFIRRAQEQRRDFTVDWVHLKLNDQAQRTVLCKDPFRSVDERVEKLIAGM.

Glutamate 9 contributes to the Mg(2+) binding site. Arginine 53 provides a ligand contact to ATP. Residue tyrosine 55 coordinates Mg(2+). Residue aspartate 57 is the Proton acceptor of the active site. A Mg(2+)-binding site is contributed by glutamate 63. ATP is bound by residues threonine 66 and tryptophan 420.

It belongs to the Pup ligase/Pup deamidase family. Pup-conjugating enzyme subfamily.

It catalyses the reaction ATP + [prokaryotic ubiquitin-like protein]-L-glutamate + [protein]-L-lysine = ADP + phosphate + N(6)-([prokaryotic ubiquitin-like protein]-gamma-L-glutamyl)-[protein]-L-lysine.. It participates in protein degradation; proteasomal Pup-dependent pathway. Its pathway is protein modification; protein pupylation. Functionally, catalyzes the covalent attachment of the prokaryotic ubiquitin-like protein modifier Pup to the proteasomal substrate proteins, thereby targeting them for proteasomal degradation. This tagging system is termed pupylation. The ligation reaction involves the side-chain carboxylate of the C-terminal glutamate of Pup and the side-chain amino group of a substrate lysine. In Streptomyces griseus subsp. griseus (strain JCM 4626 / CBS 651.72 / NBRC 13350 / KCC S-0626 / ISP 5235), this protein is Pup--protein ligase.